The chain runs to 59 residues: Single-pass membrane and coiled-coil domain-containing protein 4 (59 aa).

The interval 1–23 is disordered; sequence MRQLKGKPKKETSKDKRERKQAM. The span at 9-23 shows a compositional bias: basic and acidic residues; it reads KKETSKDKRERKQAM. Residues 9–30 adopt a coiled-coil conformation; the sequence is KKETSKDKRERKQAMQDARKQV. The helical transmembrane segment at 32 to 52 threads the bilayer; sequence TVVLPTVAVVVLLIVFFVYAA.

Belongs to the SMCO4 family.

It is found in the membrane. This is Single-pass membrane and coiled-coil domain-containing protein 4 (smco4) from Takifugu rubripes (Japanese pufferfish).